The sequence spans 307 residues: Woronin sorting complex protein (307 aa).

The next 3 membrane-spanning stretches (helical) occupy residues 106-125 (MATY…IWIL), 146-167 (NLIV…IAGA), and 207-227 (AWMP…NYIT). Basic and acidic residues predominate over residues 241–264 (GDGAHGDHRHDRERERDRERERHS). The interval 241–307 (GDGAHGDHRH…YPSLGQNPRY (67 aa)) is disordered. Residues 266–278 (PPHGHGPSHGGRP) are compositionally biased toward low complexity.

Belongs to the peroxisomal membrane protein PXMP2/4 family. In terms of assembly, self-assembles into detergent-resistant oligomers and forms a complex with hex-1 assemblies.

The protein localises to the peroxisome membrane. Its subcellular location is the cell septum. Functionally, woronin sorting complex protein involved in both Woronin bodies (WB) formation and inherence. Localizes to large peroxisome membranes where it self-assembles into detergent-resistant oligomers that envelop hex-1 assemblies, producing asymmetrical nascent WBs. These structures are then delivered to the cell cortex, which permits partitioning of the nascent WB and WB inheritance. This chain is Woronin sorting complex protein, found in Neurospora crassa (strain ATCC 24698 / 74-OR23-1A / CBS 708.71 / DSM 1257 / FGSC 987).